The following is a 1406-amino-acid chain: Ubiquitin carboxyl-terminal hydrolase 6 (1406 aa).

One can recognise a Rab-GAP TBC domain in the interval 100 to 292 (GIPMNIRGPV…RLWDVYLVEG (193 aa)). The segment at 348 to 380 (KLTRKQGDLPPPAKREQGSLAPRPVPASRGGKT) is disordered. One can recognise a USP domain in the interval 532–1369 (TGLSNLGNTC…SAYILFYEQQ (838 aa)). Residue Cys541 is the Nucleophile of the active site. The tract at residues 1120–1231 (HKPLTPQGDE…KKNLDASKEN (112 aa)) is disordered. Over residues 1129–1155 (ELSKPRILAREVKKVDAQSSAGKEDML) the composition is skewed to basic and acidic residues. Over residues 1156–1197 (LSKSPSSLSANISSSPKGSPSSSRKSGTSCPSSKNSSPNSSP) the composition is skewed to low complexity. The active-site Proton acceptor is His1328. The disordered stretch occupies residues 1384–1406 (KMADTSSTDEDSESDYEKYSMLQ).

Belongs to the peptidase C19 family. As to quaternary structure, interacts with RAC1 and CDC42. Interacts (via Rab-GAP TBC domain) with ARF6. Interacts with calmodulin (CALM1, CALM2 and/or CALM3); the interaction is calcium-dependent. Monubiquitinated; ubiquitination is calmodulin and calcium dependent. As to expression, testis specific. Expressed in various cancer cell lines.

It localises to the cell membrane. Its subcellular location is the cytoplasm. The protein resides in the endosome. It catalyses the reaction Thiol-dependent hydrolysis of ester, thioester, amide, peptide and isopeptide bonds formed by the C-terminal Gly of ubiquitin (a 76-residue protein attached to proteins as an intracellular targeting signal).. In terms of biological role, deubiquitinase with an ATP-independent isopeptidase activity, cleaving at the C-terminus of the ubiquitin moiety. Catalyzes its own deubiquitination. In vitro, isoform 2, but not isoform 3, shows deubiquitinating activity. Promotes plasma membrane localization of ARF6 and selectively regulates ARF6-dependent endocytic protein trafficking. Is able to initiate tumorigenesis by inducing the production of matrix metalloproteinases following NF-kappa-B activation. May act as a GTPase-activating protein for RAB3A. The protein is Ubiquitin carboxyl-terminal hydrolase 6 (USP6) of Homo sapiens (Human).